The chain runs to 346 residues: Histidinol-phosphate aminotransferase (346 aa).

K209 bears the N6-(pyridoxal phosphate)lysine mark.

Belongs to the class-II pyridoxal-phosphate-dependent aminotransferase family. Histidinol-phosphate aminotransferase subfamily. Homodimer. Requires pyridoxal 5'-phosphate as cofactor.

It catalyses the reaction L-histidinol phosphate + 2-oxoglutarate = 3-(imidazol-4-yl)-2-oxopropyl phosphate + L-glutamate. The protein operates within amino-acid biosynthesis; L-histidine biosynthesis; L-histidine from 5-phospho-alpha-D-ribose 1-diphosphate: step 7/9. This Aliivibrio fischeri (strain MJ11) (Vibrio fischeri) protein is Histidinol-phosphate aminotransferase.